The primary structure comprises 100 residues: Small ribosomal subunit protein uS14c (100 aa).

The protein belongs to the universal ribosomal protein uS14 family. In terms of assembly, part of the 30S ribosomal subunit.

The protein resides in the plastid. It is found in the chloroplast. In terms of biological role, binds 16S rRNA, required for the assembly of 30S particles. The sequence is that of Small ribosomal subunit protein uS14c from Aethionema cordifolium (Lebanon stonecress).